The following is a 150-amino-acid chain: Lipoprotein signal peptidase (150 aa).

3 helical membrane-spanning segments follow: residues Leu-5–Val-25, Gln-59–Trp-79, and Ala-83–Ile-103. Active-site residues include Asp-113 and Asp-129. The chain crosses the membrane as a helical span at residues Ile-124–Leu-144.

It belongs to the peptidase A8 family.

Its subcellular location is the cell membrane. The enzyme catalyses Release of signal peptides from bacterial membrane prolipoproteins. Hydrolyzes -Xaa-Yaa-Zaa-|-(S,diacylglyceryl)Cys-, in which Xaa is hydrophobic (preferably Leu), and Yaa (Ala or Ser) and Zaa (Gly or Ala) have small, neutral side chains.. The protein operates within protein modification; lipoprotein biosynthesis (signal peptide cleavage). Functionally, this protein specifically catalyzes the removal of signal peptides from prolipoproteins. The protein is Lipoprotein signal peptidase of Lactococcus lactis subsp. lactis (strain IL1403) (Streptococcus lactis).